Here is an 845-residue protein sequence, read N- to C-terminus: Probable inorganic carbon transporter subunit DabA (845 aa).

Residues 1–20 (MPMASGDESMSARSENPVQS) are disordered. The Zn(2+) site is built by Cys345, Asp347, His516, and Cys531.

The protein belongs to the inorganic carbon transporter (TC 9.A.2) DabA family. Forms a complex with DabB. Zn(2+) serves as cofactor.

Its subcellular location is the cell inner membrane. In terms of biological role, part of an energy-coupled inorganic carbon pump. This Azotobacter vinelandii (strain DJ / ATCC BAA-1303) protein is Probable inorganic carbon transporter subunit DabA.